The following is a 1302-amino-acid chain: DNA-directed RNA polymerase subunit beta (1302 aa).

This sequence belongs to the RNA polymerase beta chain family. The RNAP catalytic core consists of 2 alpha, 1 beta, 1 beta' and 1 omega subunit. When a sigma factor is associated with the core the holoenzyme is formed, which can initiate transcription.

The catalysed reaction is RNA(n) + a ribonucleoside 5'-triphosphate = RNA(n+1) + diphosphate. DNA-dependent RNA polymerase catalyzes the transcription of DNA into RNA using the four ribonucleoside triphosphates as substrates. This Spiroplasma citri protein is DNA-directed RNA polymerase subunit beta.